The following is a 435-amino-acid chain: Tol-Pal system protein TolB (435 aa).

Positions 1-26 (MKIFSPIRLVLAIAALMSVFSAPAFA) are cleaved as a signal peptide.

It belongs to the TolB family. As to quaternary structure, the Tol-Pal system is composed of five core proteins: the inner membrane proteins TolA, TolQ and TolR, the periplasmic protein TolB and the outer membrane protein Pal. They form a network linking the inner and outer membranes and the peptidoglycan layer.

Its subcellular location is the periplasm. In terms of biological role, part of the Tol-Pal system, which plays a role in outer membrane invagination during cell division and is important for maintaining outer membrane integrity. In Agrobacterium fabrum (strain C58 / ATCC 33970) (Agrobacterium tumefaciens (strain C58)), this protein is Tol-Pal system protein TolB.